Consider the following 417-residue polypeptide: Brevican core protein (417 aa).

The N-terminal stretch at 1–22 (MAPLFLPLLIALALAPGPTASA) is a signal peptide. The region spanning 23–155 (DVLEGDSSED…SSDAVEVKVK (133 aa)) is the Ig-like V-type domain. 3 disulfides stabilise this stretch: C57/C137, C179/C250, and C203/C224. N-linked (GlcNAc...) asparagine glycosylation is present at N130. 2 consecutive Link domains span residues 157-252 (VVFL…YCYA) and 257-354 (GELF…YCFR). N267 carries an N-linked (GlcNAc...) asparagine glycan. Intrachain disulfides connect C277–C352 and C301–C322. N-linked (GlcNAc...) asparagine glycosylation is present at N337.

This sequence belongs to the aggrecan/versican proteoglycan family. Central nervous system.

The protein resides in the secreted. It is found in the extracellular space. The protein localises to the extracellular matrix. May play a role in the terminally differentiating and the adult nervous system during postnatal development. Could stabilize interactions between hyaluronan (HA) and brain proteoglycans. The sequence is that of Brevican core protein (BCAN) from Felis catus (Cat).